Reading from the N-terminus, the 553-residue chain is 4-coumarate--CoA ligase (553 aa).

Serine 198, serine 199, glycine 200, threonine 201, threonine 202, and lysine 206 together coordinate ATP. Residues tyrosine 248 and serine 252 each contribute to the (E)-4-coumaroyl-AMP site. Lysine 269 provides a ligand contact to CoA. The segment at 271–340 (EIVPFLELIQ…AKFPNAKLGQ (70 aa)) is SBD1. (E)-4-coumaroyl-AMP contacts are provided by alanine 318, glutamine 340, glycine 341, threonine 345, and methionine 353. The ATP site is built by glutamine 340, glycine 341, and threonine 345. Residues 341–408 (GYGMTEAGPV…IRGDQIMKGY (68 aa)) form an SBD2 region. ATP contacts are provided by aspartate 429 and arginine 444. Residues lysine 446 and lysine 450 each contribute to the (E)-4-coumaroyl-AMP site. Residues lysine 452 and glycine 453 each coordinate CoA. An ATP-binding site is contributed by lysine 535.

This sequence belongs to the ATP-dependent AMP-binding enzyme family. Mg(2+) serves as cofactor.

It carries out the reaction (E)-4-coumarate + ATP + CoA = (E)-4-coumaroyl-CoA + AMP + diphosphate. The enzyme catalyses (E)-4-coumarate + ATP + H(+) = (E)-4-coumaroyl-AMP + diphosphate. The catalysed reaction is (E)-4-coumaroyl-AMP + CoA = (E)-4-coumaroyl-CoA + AMP + H(+). Its pathway is phytoalexin biosynthesis; 3,4',5-trihydroxystilbene biosynthesis; 3,4',5-trihydroxystilbene from trans-4-coumarate: step 1/2. In terms of biological role, carboxylate--CoA ligase that may use 4-coumarate as substrate. Follows a two-step reaction mechanism, wherein the carboxylate substrate first undergoes adenylation by ATP, followed by a thioesterification in the presence of CoA to yield the final CoA thioester. The polypeptide is 4-coumarate--CoA ligase (Vanilla planifolia (Vanilla)).